The chain runs to 1186 residues: Atrophin-1 (1186 aa).

Disordered regions lie at residues 1-604 (MKTR…PTVT), 618-763 (ASSP…ARFN), and 781-858 (VPLE…HRPP). A Nuclear localization signal motif is present at residues 16-32 (RKKEAPGPREELRSRGR). The span at 17–29 (KKEAPGPREELRS) shows a compositional bias: basic and acidic residues. Position 34 is a phosphoserine (Ser34). Residues 45 to 63 (GKAEKSRQTAKKARVEEAS) are compositionally biased toward basic and acidic residues. Residues Ser77, Ser79, Ser100, Ser102, and Ser106 each carry the phosphoserine modification. A compositionally biased stretch (basic and acidic residues) spans 107–127 (LDGRSLNDDGSSDPRDIDQDN). Positions 128–151 (RSTSPSIYSPGSVENDSDSSSGLS) are enriched in polar residues. Positions 157 to 173 (PYHPPPLFPPSPQPPDS) are enriched in pro residues. 3 stretches are compositionally biased toward low complexity: residues 258-270 (PISVSSSGASGAP), 349-365 (PTLAPSPHSLPPASSSA), and 375-396 (SSSSSSSAAASSSSSSSSSSAS). A compositionally biased stretch (polar residues) spans 416–437 (SLSVSNQPPKYTQPSLPSQAVW). Positions 484–503 (QQQQQQQQQQQQQQQHHGNS) are enriched in low complexity. The involved in binding BAIAP2 stretch occupies residues 513–563 (HPLEGGSSHHAHPYAMSPSLGSLRPYPPGPAHLPPPHSQVSYSQAGPNGPP). Residues 537 to 549 (PYPPGPAHLPPPH) are compositionally biased toward pro residues. 2 stretches are compositionally biased toward low complexity: residues 565–582 (SSSSNSSSSTSQGSYPCS) and 618–628 (ASSPAGYKTAS). Residue Ser628 is modified to Phosphoserine. At Lys637 the chain carries N6-acetyllysine. Thr649 is modified (phosphothreonine). A Phosphoserine modification is found at Ser657. At Thr665 the chain carries Phosphothreonine. Composition is skewed to pro residues over residues 689–714 (GPGPLPPAGPSGLPSLPPPPAAPASG) and 735–748 (SPVPPARSPSPPPK). Ser735 is subject to Phosphoserine; by MAPK8. Phosphoserine is present on residues Ser742 and Ser744. A compositionally biased stretch (basic and acidic residues) spans 791–835 (KRADLVEKVRREAEQRAREEKEREREREREKEREREKERELERSV). The interval 875-890 (DTPALRTLSEYARPHV) is required for interaction with FAT1. Ser892 carries the phosphoserine modification. A Nuclear export signal motif is present at residues 1029–1037 (ALGNDPLAR). Arg1111 carries the post-translational modification Asymmetric dimethylarginine. Lys1179 participates in a covalent cross-link: Glycyl lysine isopeptide (Lys-Gly) (interchain with G-Cter in SUMO2).

Interacts with NR2E1; the interaction represses the transcriptional activity of NR2E1. Interacts with BAIAP2, WWP1, WWP2, WWP3 and RERE. Interacts (via its N-terminus) with MTG8; the interaction enhances transcriptional repression of MTG8. Interacts with FAT1 (via a C-terminal domain). Interacts with PQBP1. Phosphorylated in vitro by MAPK8/JNK1 on Ser-735.

Its subcellular location is the nucleus. It localises to the cytoplasm. The protein resides in the perinuclear region. It is found in the cell junction. Its function is as follows. Transcriptional corepressor. Corepressor of MTG8 transcriptional repression. Recruits NR2E1 to repress transcription. Has some intrinsic repression activity. Promotes vascular smooth cell (VSMC) migration and orientation. The sequence is that of Atrophin-1 (ATN1) from Pan troglodytes (Chimpanzee).